Here is a 374-residue protein sequence, read N- to C-terminus: Pectate lyase 1 (374 aa).

A signal peptide spans 1–22 (MKYLLPSAAAGLLLLAAQPTMA). Cysteine 93 and cysteine 176 are disulfide-bonded. Residues aspartate 150, aspartate 152, glutamate 187, and aspartate 191 each coordinate Ca(2+). Arginine 239 is a catalytic residue. Cysteine 350 and cysteine 373 are oxidised to a cystine.

This sequence belongs to the polysaccharide lyase 1 family. PLADES subfamily. The cofactor is Ca(2+).

It is found in the secreted. The enzyme catalyses Eliminative cleavage of (1-&gt;4)-alpha-D-galacturonan to give oligosaccharides with 4-deoxy-alpha-D-galact-4-enuronosyl groups at their non-reducing ends.. Its pathway is glycan metabolism; pectin degradation; 2-dehydro-3-deoxy-D-gluconate from pectin: step 2/5. Involved in maceration and soft-rotting of plant tissue. The chain is Pectate lyase 1 (pel1) from Pectobacterium atrosepticum (strain SCRI 1043 / ATCC BAA-672) (Erwinia carotovora subsp. atroseptica).